Reading from the N-terminus, the 348-residue chain is Ion-translocating oxidoreductase complex subunit D (348 aa).

Transmembrane regions (helical) follow at residues 15–35 (LTAK…GMQA), 36–56 (YFFG…AVAI), 67–87 (LTAF…LAMS), 88–108 (IPPY…LLLA), and 125–145 (VAYA…LVPI). Residue Thr186 is modified to FMN phosphoryl threonine. Transmembrane regions (helical) follow at residues 212 to 232 (LFAN…LLLI), 241 to 261 (IPAA…LLLP), 265 to 285 (LNVV…FIAT), 298 to 318 (LIFG…GNYP), and 320 to 340 (AVAF…HYTQ).

Belongs to the NqrB/RnfD family. In terms of assembly, the complex is composed of six subunits: RnfA, RnfB, RnfC, RnfD, RnfE and RnfG. It depends on FMN as a cofactor.

It is found in the cell inner membrane. In terms of biological role, part of a membrane-bound complex that couples electron transfer with translocation of ions across the membrane. The polypeptide is Ion-translocating oxidoreductase complex subunit D (Actinobacillus pleuropneumoniae serotype 7 (strain AP76)).